A 152-amino-acid polypeptide reads, in one-letter code: Transcriptional repressor NrdR (152 aa).

A zinc finger spans residues 3 to 34; the sequence is CPFCNAADSKVIDSRLAAEGCQIRRRRECVSC. In terms of domain architecture, ATP-cone spans 49–139; it reads PRVIKSNGKN…VYQDFQDVEA (91 aa).

This sequence belongs to the NrdR family. Zn(2+) is required as a cofactor.

Negatively regulates transcription of bacterial ribonucleotide reductase nrd genes and operons by binding to NrdR-boxes. In Acinetobacter baumannii (strain AB0057), this protein is Transcriptional repressor NrdR.